Consider the following 213-residue polypeptide: Uridine kinase (213 aa).

15–22 (GASASGKS) serves as a coordination point for ATP.

It belongs to the uridine kinase family.

The protein localises to the cytoplasm. It carries out the reaction uridine + ATP = UMP + ADP + H(+). The enzyme catalyses cytidine + ATP = CMP + ADP + H(+). Its pathway is pyrimidine metabolism; CTP biosynthesis via salvage pathway; CTP from cytidine: step 1/3. It functions in the pathway pyrimidine metabolism; UMP biosynthesis via salvage pathway; UMP from uridine: step 1/1. This Pectobacterium atrosepticum (strain SCRI 1043 / ATCC BAA-672) (Erwinia carotovora subsp. atroseptica) protein is Uridine kinase.